The primary structure comprises 448 residues: Acyl-lipid (9-3)-desaturase (448 aa).

One can recognise a Cytochrome b5 heme-binding domain in the interval 6-90; it reads KKYITSDELK…LKDYSVSEVS (85 aa). Heme is bound by residues His-41 and His-64. 2 consecutive transmembrane segments (helical) span residues 112–132 and 137–157; these read IMFATLCFIAMLFAMSVYGVL and VLVHLFSGCLMGFLWIQSGWI. The Histidine box-1 motif lies at 159–163; it reads HDAGH. A helical transmembrane segment spans residues 172–192; the sequence is LNKFMGIFAANCLSGISIGWW. The short motif at 196–200 is the Histidine box-2 element; it reads HNAHH. 3 consecutive transmembrane segments (helical) span residues 212 to 232, 254 to 274, and 286 to 306; these read LQYIPFLVVSSKFFGSLTSHF, FYPIMCAARLNMYVQSLIMLL, and LLGCLVFSIWYPLLVSCLPNW. The Histidine box-3 motif lies at 373–377; it reads QIEHH.

The protein belongs to the fatty acid desaturase type 1 family.

It is found in the endoplasmic reticulum membrane. It catalyses the reaction (9Z,12Z,15Z)-octadecatrienoyl-containing glycerolipid + 2 Fe(II)-[cytochrome b5] + O2 + 2 H(+) = (6Z,9Z,12Z,15Z)-octadecatetraenoyl-containing glycerolipid + 2 Fe(III)-[cytochrome b5] + 2 H2O. The enzyme catalyses a (9Z,12Z)-octadecadienoyl-containing glycerolipid + 2 Fe(II)-[cytochrome b5] + O2 + 2 H(+) = (6Z,9Z,12Z)-octadecatrienoyl-containing glycerolipid + 2 Fe(III)-[cytochrome b5] + 2 H2O. It functions in the pathway lipid metabolism; polyunsaturated fatty acid biosynthesis. Fatty acid desaturase able to introduce a delta(6)-double bond into delta(9)-unsaturated fatty-acid substrates. Can use both linoleic acid (18:2(9Z,12Z)) and alpha-linolenic acid (18:3(9Z,12Z,15Z)) as substrates. This Borago officinalis (Bourrache) protein is Acyl-lipid (9-3)-desaturase.